Reading from the N-terminus, the 458-residue chain is UDP-N-acetylmuramoylalanine--D-glutamate ligase (458 aa).

124–130 (GSDGKTT) lines the ATP pocket.

This sequence belongs to the MurCDEF family.

The protein localises to the cytoplasm. It catalyses the reaction UDP-N-acetyl-alpha-D-muramoyl-L-alanine + D-glutamate + ATP = UDP-N-acetyl-alpha-D-muramoyl-L-alanyl-D-glutamate + ADP + phosphate + H(+). It participates in cell wall biogenesis; peptidoglycan biosynthesis. In terms of biological role, cell wall formation. Catalyzes the addition of glutamate to the nucleotide precursor UDP-N-acetylmuramoyl-L-alanine (UMA). This Clostridium botulinum (strain Kyoto / Type A2) protein is UDP-N-acetylmuramoylalanine--D-glutamate ligase.